A 296-amino-acid polypeptide reads, in one-letter code: Inactive uridine phosphorylase B (296 aa).

Belongs to the PNP/UDP phosphorylase family. Homodimer.

The protein is Inactive uridine phosphorylase B of Schistosoma mansoni (Blood fluke).